The chain runs to 639 residues: mRNA export factor (639 aa).

Disordered stretches follow at residues 1-45 (MQAE…SLES), 63-287 (LLGD…KWGA), and 322-355 (CTARDPARAHDSGAECPPTEKRDERRTCAPSQPR). Positions 142-152 (PRRRTHARSRS) are enriched in basic residues. Low complexity predominate over residues 153–169 (PRAGSTSSQQPPSSSGG). Positions 175–189 (VRREAGDRETSEKPA) are enriched in basic and acidic residues. Positions 203–215 (HQCQSPPAQTASQ) are enriched in polar residues. 2 stretches are compositionally biased toward basic and acidic residues: residues 234–247 (RTPHDHQERRHEGA) and 326–348 (DPARAHDSGAECPPTEKRDERRT). Residues cysteine 525, histidine 606, cysteine 610, and cysteine 615 each contribute to the Zn(2+) site. The segment at 525–615 (CHLAASKSPL…HANVCRKEEC (91 aa)) adopts a CHC2-type zinc-finger fold.

The protein belongs to the HHV-1 ICP27 protein family.

It localises to the host cytoplasm. The protein localises to the host nucleus. In terms of biological role, multifunctional regulator of the expression of viral genes that mediates nuclear export of viral intronless mRNAs. This immediate early (EI) protein promotes the nuclear export of viral intronless mRNAs. This Amazona oratrix (yellow-headed parrot) protein is mRNA export factor.